An 876-amino-acid polypeptide reads, in one-letter code: Alanine--tRNA ligase (876 aa).

Positions 2 to 461 (SKSTAEIRQA…VDSASEFKGY (460 aa)) are catalytic. An N6-acetyllysine modification is found at lysine 74. An editing region spans residues 553 to 705 (DEARRARIRL…EAVTGEGAIA (153 aa)). Positions 564, 568, 666, and 670 each coordinate Zn(2+). Residues 699–808 (TGEGAIATVH…STIIVLATVV (110 aa)) are important for oligomerization. Residues 766-875 (IDVNGVKLLV…SVKGWVSAKL (110 aa)) form a C-Ala domain region.

Belongs to the class-II aminoacyl-tRNA synthetase family. As to quaternary structure, homotetramer. Zn(2+) serves as cofactor.

It localises to the cytoplasm. It carries out the reaction tRNA(Ala) + L-alanine + ATP = L-alanyl-tRNA(Ala) + AMP + diphosphate. The catalysed reaction is (S)-lactate + ATP + H(+) = (S)-lactoyl-AMP + diphosphate. The enzyme catalyses (S)-lactoyl-AMP + L-lysyl-[protein] = N(6)-[(S)-lactoyl]-L-lysyl-[protein] + AMP + 2 H(+). With respect to regulation, acetylation at Lys-74 decreases the alanylation activity for tRNA(Ala); a protein that is fully acetylated is inactive in vitro. Catalyzes the attachment of L-alanine to tRNA(Ala) in a two-step reaction: L-alanine is first activated by ATP to form Ala-AMP and then transferred to the acceptor end of tRNA(Ala). AlaRS also incorrectly activates the sterically smaller amino acid glycine as well as the sterically larger amino acid L-serine; generates 2-fold more mischarged Gly than Ser. These mischarged amino acids occur because the of inherent physicochemical limitations on discrimination between closely related amino acids (Ala, Gly and Ser) in the charging step. In presence of high levels of lactate, also acts as a protein lactyltransferase that mediates lactylation of lysine residues in target proteins. In terms of biological role, edits mischarged Ser-tRNA(Ala) and Gly-tRNA(Ala) but not incorrectly charged Ser-tRNA(Thr). Dtd edits Gly-tRNA(Ala) 4-fold better than does AlaRS. Its function is as follows. Attaches Ala to transfer-messenger RNA (tmRNA, also known as 10Sa RNA, the product of the ssrA gene). tmRNA plays a major role in rescue of stalled ribosomes via trans-translation. This Escherichia coli (strain K12) protein is Alanine--tRNA ligase (alaS).